A 93-amino-acid chain; its full sequence is DNA-directed RNA polymerase subunit omega (93 aa).

This sequence belongs to the RNA polymerase subunit omega family. The RNAP catalytic core consists of 2 alpha, 1 beta, 1 beta' and 1 omega subunit. When a sigma factor is associated with the core the holoenzyme is formed, which can initiate transcription.

It carries out the reaction RNA(n) + a ribonucleoside 5'-triphosphate = RNA(n+1) + diphosphate. Its function is as follows. Promotes RNA polymerase assembly. Latches the N- and C-terminal regions of the beta' subunit thereby facilitating its interaction with the beta and alpha subunits. The protein is DNA-directed RNA polymerase subunit omega of Glaesserella parasuis serovar 5 (strain SH0165) (Haemophilus parasuis).